The following is a 477-amino-acid chain: MGSYALPRSGVRRSIRVLLLALVVGVLGTATALIAPPGAHAAESTLGAAAAQSGRYFGTAIASGRLSDSTYTSIAGREFNMVTAENEMKIDATEPQRGQFNFSSADRVYNWAVQNGKQVRGHTLAWHSQQPGWMQSLSGSALRQAMIDHINGVMAHYKGKIVQWDVVNEAFADGSSGARRDSNLQRSGNDWIEVAFRTARAADPSAKLCYNDYNVENWTWAKTQAMYNMVRDFKQRGVPIDCVGFQSHFNSGSPYNSNFRTTLQNFAALGVDVAITELDIQGAPASTYANVTNDCLAVSRCLGITVWGVRDSDSWRSEQTPLLFNNDGSKKAAYTAVLDALNGGDSSEPPADGGQIKGVGSGRCLDVPDASTSDGTQLQLWDCHSGTNQQWAATDAGELRVYGDKCLDAAGTSNGSKVQIYSCWGGDNQKWRLNSDGSVVGVQSGLCLDAVGNGTANGTLIQLYTCSNGSNQRWTRT.

The first 41 residues, 1 to 41, serve as a signal peptide directing secretion; that stretch reads MGSYALPRSGVRRSIRVLLLALVVGVLGTATALIAPPGAHA. The 299-residue stretch at 42 to 340 folds into the GH10 domain; the sequence is AESTLGAAAA…KAAYTAVLDA (299 aa). The Proton donor role is filled by Glu169. Glu277 serves as the catalytic Nucleophile. The region spanning 361–477 is the Ricin B-type lectin domain; sequence SGRCLDVPDA…NGSNQRWTRT (117 aa). 3 cysteine pairs are disulfide-bonded: Cys364–Cys383, Cys406–Cys423, and Cys447–Cys466.

Belongs to the glycosyl hydrolase 10 (cellulase F) family.

Its subcellular location is the secreted. It catalyses the reaction Endohydrolysis of (1-&gt;4)-beta-D-xylosidic linkages in xylans.. The protein operates within glycan degradation; xylan degradation. Functionally, contributes to hydrolyze hemicellulose, the major component of plant cell-walls. XLNA and XLNB seem to act sequentially on the substrate to yield xylobiose and xylose as carbon sources. The polypeptide is Endo-1,4-beta-xylanase A (xlnA) (Streptomyces lividans).